Consider the following 390-residue polypeptide: 8-amino-7-oxononanoate synthase (390 aa).

Position 19 (Arg-19) interacts with substrate. 106–107 (GY) is a pyridoxal 5'-phosphate binding site. His-131 contributes to the substrate binding site. The pyridoxal 5'-phosphate site is built by Ser-176, His-204, and Thr-233. Residue Lys-236 is modified to N6-(pyridoxal phosphate)lysine. Thr-350 serves as a coordination point for substrate.

This sequence belongs to the class-II pyridoxal-phosphate-dependent aminotransferase family. BioF subfamily. Homodimer. Pyridoxal 5'-phosphate is required as a cofactor.

It catalyses the reaction 6-carboxyhexanoyl-[ACP] + L-alanine + H(+) = (8S)-8-amino-7-oxononanoate + holo-[ACP] + CO2. The protein operates within cofactor biosynthesis; biotin biosynthesis. In terms of biological role, catalyzes the decarboxylative condensation of pimeloyl-[acyl-carrier protein] and L-alanine to produce 8-amino-7-oxononanoate (AON), [acyl-carrier protein], and carbon dioxide. In Pseudomonas putida (strain ATCC 47054 / DSM 6125 / CFBP 8728 / NCIMB 11950 / KT2440), this protein is 8-amino-7-oxononanoate synthase.